The following is a 91-amino-acid chain: Large ribosomal subunit protein eL37 (91 aa).

Positions 19, 22, 34, and 37 each coordinate Zn(2+). The segment at 19-37 (CKRCGKSSFHIQKKRCASC) adopts a C4-type zinc-finger fold.

The protein belongs to the eukaryotic ribosomal protein eL37 family. It depends on Zn(2+) as a cofactor.

Functionally, binds to the 23S rRNA. This Caenorhabditis elegans protein is Large ribosomal subunit protein eL37.